A 440-amino-acid polypeptide reads, in one-letter code: Protein CyaD (440 aa).

Residues 1–55 (MRRALRELAARHGRVLAASWRQRHRRPAGWFDPVETEFLPSALSLQERPISPTAR) lie on the Cytoplasmic side of the membrane. Residues 56–75 (WLARILMALAAGALVWSVVG) traverse the membrane as a helical segment. Residues 76-440 (KTEIVVHAAG…RHAGESLGER (365 aa)) lie on the Periplasmic side of the membrane.

This sequence belongs to the membrane fusion protein (MFP) (TC 8.A.1) family.

The protein localises to the cell inner membrane. In terms of biological role, cyaD is necessary for transport of calmodulin-sensitive adenylate cyclase-hemolysin (cyclolysin). The protein is Protein CyaD (cyaD) of Bordetella pertussis (strain ATCC 9797 / DSM 5571 / CCUG 30873 / LMG 14455 / NCTC 10739 / 18323).